A 387-amino-acid polypeptide reads, in one-letter code: Probable serine/threonine-protein kinase RIO1 homolog (387 aa).

Residues V41–N387 form the Protein kinase domain. K91 contributes to the ATP binding site. D204 acts as the Proton acceptor in catalysis. The Mg(2+) site is built by N209 and D221. D221 functions as the 4-aspartylphosphate intermediate in the catalytic mechanism. The segment at E309 to K372 is disordered. The segment covering S312–T321 has biased composition (low complexity). The segment covering I361–K372 has biased composition (basic residues).

It belongs to the protein kinase superfamily. RIO-type Ser/Thr kinase family. Requires Mg(2+) as cofactor.

Its subcellular location is the cytoplasm. The enzyme catalyses L-seryl-[protein] + ATP = O-phospho-L-seryl-[protein] + ADP + H(+). The catalysed reaction is L-threonyl-[protein] + ATP = O-phospho-L-threonyl-[protein] + ADP + H(+). It carries out the reaction ATP + H2O = ADP + phosphate + H(+). Its function is as follows. Required for the final endonucleolytic cleavage at site D converting 20S pre-rRNA into the mature 18S rRNA. Required for the final steps of cytoplasmic maturation of the 40S ribosomal subunit. Despite the protein kinase domain is proposed to act predominantly as an ATPase. Has a role in the cell cycle where it is required for entrance into S-phase and in the control of the onset of anaphase. Appears to also be involved in the maintenance of chromosome stability and correct mitotic segregation. This chain is Probable serine/threonine-protein kinase RIO1 homolog (RIO1), found in Encephalitozoon cuniculi (strain GB-M1) (Microsporidian parasite).